Here is a 329-residue protein sequence, read N- to C-terminus: MTWQSSLQLHFDCASNAAKTRLYHRAHTGALMVQRALYPEPDSTDSSQAGICHIYVLYPPAGIADDDRLTLEFDLHSNSHAVITTPGAGKWYGQRKSLRYSRPSDSSKFTNGTQSANSNTSNDCFNDVVSAEQHIDARLDDHAVLEWLPQESIYYDHSVSTANNRFYLAKTASLLTWDIAVFGRQAYQETFANGHYANRLEIWRESDLLVSECTAQQANTRWFTSPLGLNDQHVHGSFWAIPSTEVIAPELQNNPLKLGQYLDATITEIRNLIDTQSLPIHCTHNFQGINCRYLGADVRACFEAFYQIRELIRSKWYKLEPHRPRIWDT.

Positions 100–120 are disordered; it reads YSRPSDSSKFTNGTQSANSNT. Residues 103-120 are compositionally biased toward polar residues; it reads PSDSSKFTNGTQSANSNT.

It belongs to the UreD family. UreD, UreF and UreG form a complex that acts as a GTP-hydrolysis-dependent molecular chaperone, activating the urease apoprotein by helping to assemble the nickel containing metallocenter of UreC. The UreE protein probably delivers the nickel.

Its subcellular location is the cytoplasm. Its function is as follows. Required for maturation of urease via the functional incorporation of the urease nickel metallocenter. The chain is Urease accessory protein UreD 2 from Psychrobacter cryohalolentis (strain ATCC BAA-1226 / DSM 17306 / VKM B-2378 / K5).